The primary structure comprises 364 residues: MTTPPPRPAAPTTDPGDTPTWAMILGRLTTGQSLLPGQTAWAMDQIMTGVATPAQIAAFAVSMKMKRPTSAEVTELAEIMLKHALPVPTDTIGTHTVDIVGTGGDGANTVNLSTMASIVVAAAGVPVVKHGNRAASSLSGGADTLEALGLRIDLGPDDVARCVAEVGIGFAFAPQFHPSYRHAGAVRREIGVPTVFNLLGPLTNPAKPRAGLIGCAWGDLAEVMAGVFATRGSSALVVHGDDGLDELTTTTTSTIWRVQAGTVERLTFDPAAFGFARAHVSELTGGDAEANAASAREVLGGATGPVRDAVLLNAAGAMVAHAGLSSDAKWVPAWESGLARAKEAIDSGAAEQLLARWVRFTQEL.

5-phospho-alpha-D-ribose 1-diphosphate is bound by residues Gly-101, 104–105, Thr-109, 111–114, 129–137, and Gly-141; these read GD, NLST, and KHGNRAASS. Position 101 (Gly-101) interacts with anthranilate. A Mg(2+)-binding site is contributed by Ser-113. Anthranilate is bound at residue Asn-132. Anthranilate is bound at residue Arg-187. The Mg(2+) site is built by Asp-245 and Glu-246.

Belongs to the anthranilate phosphoribosyltransferase family. As to quaternary structure, homodimer. Requires Mg(2+) as cofactor.

It carries out the reaction N-(5-phospho-beta-D-ribosyl)anthranilate + diphosphate = 5-phospho-alpha-D-ribose 1-diphosphate + anthranilate. The protein operates within amino-acid biosynthesis; L-tryptophan biosynthesis; L-tryptophan from chorismate: step 2/5. Its function is as follows. Catalyzes the transfer of the phosphoribosyl group of 5-phosphorylribose-1-pyrophosphate (PRPP) to anthranilate to yield N-(5'-phosphoribosyl)-anthranilate (PRA). This Mycolicibacterium gilvum (strain PYR-GCK) (Mycobacterium gilvum (strain PYR-GCK)) protein is Anthranilate phosphoribosyltransferase.